The chain runs to 456 residues: MADNPVYLSVSDLNFYISQKFKNDPYLHKVFLQGELSNFRFRMHSHQYFSLKDDKSKINVVMFRSFFEKLKFKPEEGMKVYVSGYVDVYGPQGSYQFYAQTMEPAGLGALYEQLRQLQEKLAKEGLFNEDHKKRLPLFPDRIAVVTSASGAVIHDIMVTANRRFPHAEIDLYPAKVQGDEAADTIVASLKQIQAQGDKYDVVIIGRGGGSLEDLWPFNEEKVVRQIYAMQMPVISSVGHETDTTLADLVADARAATPTAAAEYATPNLADVLTKIVQLRARLYAAMQANIRAKRQILDRLRKAPVLQEPTRIYDQQIQQVDMLSHRLNQAISNQLQHDRSSVRLLQERLKALNPGRRLEQLERERTFIVANLFSTMTAYLKDQRNKLNRTMQQLDDISPLKTIGRGYVYTTDQEGNTVTSVDKLEIDEKLKLHFKDGQVQVNVENIRREKDGNQEK.

It belongs to the XseA family. In terms of assembly, heterooligomer composed of large and small subunits.

It localises to the cytoplasm. The enzyme catalyses Exonucleolytic cleavage in either 5'- to 3'- or 3'- to 5'-direction to yield nucleoside 5'-phosphates.. Its function is as follows. Bidirectionally degrades single-stranded DNA into large acid-insoluble oligonucleotides, which are then degraded further into small acid-soluble oligonucleotides. The sequence is that of Exodeoxyribonuclease 7 large subunit from Lactobacillus gasseri (strain ATCC 33323 / DSM 20243 / BCRC 14619 / CIP 102991 / JCM 1131 / KCTC 3163 / NCIMB 11718 / NCTC 13722 / AM63).